The following is a 591-amino-acid chain: Probable Xaa-Pro aminopeptidase PEPP (591 aa).

The interval 31–59 (SIHSPPPSVSAATHGGVKNPSFSQRRTSG) is disordered. Positions 322 and 333 each coordinate Mn(2+). Over residues 441–450 (GLSRQAISGS) the composition is skewed to low complexity. Residues 441–460 (GLSRQAISGSRRLPPPRNMK) are disordered. Mn(2+)-binding residues include glutamate 511 and glutamate 552.

The protein belongs to the peptidase M24B family. Mn(2+) is required as a cofactor.

The enzyme catalyses Release of any N-terminal amino acid, including proline, that is linked to proline, even from a dipeptide or tripeptide.. Catalyzes the removal of a penultimate prolyl residue from the N-termini of peptides. The protein is Probable Xaa-Pro aminopeptidase PEPP (PEPP) of Sordaria macrospora (strain ATCC MYA-333 / DSM 997 / K(L3346) / K-hell).